The following is a 287-amino-acid chain: N-acetylmannosamine kinase (287 aa).

ATP-binding positions include 5–12 and 131–138; these read AIDIGGTK and GVGGGIII. Histidine 155, cysteine 165, cysteine 167, and cysteine 172 together coordinate Zn(2+).

This sequence belongs to the ROK (NagC/XylR) family. NanK subfamily. As to quaternary structure, homodimer.

It catalyses the reaction an N-acyl-D-mannosamine + ATP = an N-acyl-D-mannosamine 6-phosphate + ADP + H(+). It functions in the pathway amino-sugar metabolism; N-acetylneuraminate degradation; D-fructose 6-phosphate from N-acetylneuraminate: step 2/5. Functionally, catalyzes the phosphorylation of N-acetylmannosamine (ManNAc) to ManNAc-6-P. This chain is N-acetylmannosamine kinase, found in Vibrio cholerae serotype O1 (strain ATCC 39541 / Classical Ogawa 395 / O395).